Reading from the N-terminus, the 437-residue chain is UDP-N-acetylmuramate--L-alanine ligase (437 aa).

114 to 120 is an ATP binding site; the sequence is GTHGKTS.

The protein belongs to the MurCDEF family.

It is found in the cytoplasm. It catalyses the reaction UDP-N-acetyl-alpha-D-muramate + L-alanine + ATP = UDP-N-acetyl-alpha-D-muramoyl-L-alanine + ADP + phosphate + H(+). Its pathway is cell wall biogenesis; peptidoglycan biosynthesis. Functionally, cell wall formation. This chain is UDP-N-acetylmuramate--L-alanine ligase, found in Lactobacillus acidophilus (strain ATCC 700396 / NCK56 / N2 / NCFM).